The following is a 765-amino-acid chain: NADPH oxidase 5 (765 aa).

Positions 1–77 are N-terminal lobe of N-terminal regulatory EF domain; sequence MNTSGDPAQT…LFDSDRSGTI (77 aa). The interval 1–161 is N-terminal regulatory EF domain; the sequence is MNTSGDPAQT…SCLRESAISL (161 aa). At 1-238 the chain is on the cytoplasmic side; sequence MNTSGDPAQT…RAYWHNHRSQ (238 aa). EF-hand domains lie at 26 to 56 and 57 to 92; these read RWLR…ALHV and KESF…LIHG. Ca(2+) is bound by residues D42, E44, E49, D70, D72, S74, T76, E81, and D106. Residues 78–161 form a C-terminal lobe of N-terminal regulatory EF domain region; it reads TLQELQEALT…SCLRESAISL (84 aa). The EF-hand 3; atypical; contains an insert of 28 residues domain occupies 93–156; sequence SPMDKLKFLF…RTVLQSCLRE (64 aa). An S-nitrosocysteine modification is found at I107. The Ca(2+) site is built by D108, S138, S140, E145, D178, D180, N182, and E189. The segment at 122–141 is disordered; sequence GAGAGPHWASSPLGTGSGSI. Residues 165–200 enclose the EF-hand 4 domain; sequence KLDQLTLALFESADADGNGAITFEELRDELQRFPGV. The helical transmembrane segment at 239–259 threads the bilayer; it reads LFCLATYAGLHVLLFGLAASA. The residue at position 246 (A246) is an S-nitrosocysteine. Residues 260-266 lie on the Extracellular side of the membrane; it reads HRDLGAS. The helical transmembrane segment at 267-289 threads the bilayer; it reads VMVAKGCGQCLNFDCSFIAVLML. Topologically, residues 290 to 317 are cytoplasmic; the sequence is RRCLTWLRATWLAQVLPLDQNIQFHQLM. The Ferric oxidoreductase domain occupies 293-440; that stretch reads LTWLRATWLA…FLEKAIGLAV (148 aa). Residues 318 to 338 traverse the membrane as a helical segment; that stretch reads GYVVVGLSLVHTVAHTVNFVL. Topologically, residues 339–362 are extracellular; that stretch reads QAQAEASPFQFWELLLTTRPGIGW. Residues 363–383 form a helical membrane-spanning segment; it reads VHGSASPTGVALLLLLLLMFI. Over 384-394 the chain is Cytoplasmic; sequence CSSSCIRRSGH. Residues 395–417 traverse the membrane as a helical segment; it reads FEVFYWTHLSYLLVWLLLIFHGP. C-terminal catalytic dehydrogenase domain regions lie at residues 398 to 719 and 416 to 737; these read FYWT…GRPD and GPNF…KVQV. The Extracellular segment spans residues 418-434; it reads NFWKWLLVPGILFFLEK. Residues 435–455 traverse the membrane as a helical segment; sequence AIGLAVSRMAAVCIMEVNLLP. One can recognise an FAD-binding FR-type domain in the interval 441-577; sequence SRMAAVCIME…DGPYGTPTRR (137 aa). Topologically, residues 456–583 are cytoplasmic; it reads SKVTHLLIKR…PTRRIFASEH (128 aa). A Phosphoserine; by CaMK2 modification is found at D475. H490 is subject to Phosphothreonine; by PKC/PRKCA. I494 is modified (phosphothreonine; by CaMK2 and PKC/PRKCA). Phosphoserine; by CaMK2 and PKC/PRKCA is present on P498. Phosphoserine; by CaMK2 is present on D502. Y519 bears the S-nitrosocysteine mark. Residues 584–604 traverse the membrane as a helical segment; sequence AVLIGAGIGITPFASILQSIM. Topologically, residues 605 to 765 are extracellular; sequence YRHQKRKHTC…FGFRFFQENF (161 aa). D659 carries the post-translational modification Phosphoserine; by CaMK2. An S-nitrosocysteine modification is found at L694.

In terms of assembly, homooligomer. FAD serves as cofactor. Mg(2+) is required as a cofactor. Phosphorylation at Ser-475 by CaMK2 and at Ser-490, Thr-494 and Ser-498 by PKC/PRKCA positively regulates its catalytic activity. Post-translationally, S-nitrosylation in response to nitric oxide inhibits its catalytic activity. Mainly expressed in pachytene spermatocytes of testis and in lymphocyte-rich areas of spleen and lymph nodes. Also detected in ovary, placenta, pancreas, cardiac fibroblasts. Expressed in B-cells and prostate malignant cells. As to expression, expressed in spleen. Expressed in endothelial cells, pulmonary artery smooth muscle cells and epithelial colorectal adenocarcinoma cells. In terms of tissue distribution, expressed in microvascular endothelial cells (at protein level). Expressed in testis. Expressed in endothelial cells and pulmonary artery smooth muscle cells. Expressed in pulmonary artery smooth muscle cells and epithelial colorectal adenocarcinoma cells. As to expression, expressed in endothelial cells and pulmonary artery smooth muscle cells. In terms of tissue distribution, expressed in microvascular endothelial cells (at protein level).

Its subcellular location is the endoplasmic reticulum. It is found in the cell membrane. The catalysed reaction is NADPH + 2 O2 = 2 superoxide + NADP(+) + H(+). Activated by calcium which induces conformational changes and interaction between the N-terminal regulatory region and the C-terminal catalytic region. Inhibited by diphenylene iodonium. Functionally, calcium-dependent NADPH oxidase that catalyzes the generation of superoxide from molecular oxygen utilizing NADPH as an electron donor. May play a role in cell growth and apoptosis. Its function is as follows. Calcium-dependent NADPH oxidase that catalyzes the generation of superoxide from molecular oxygen utilizing NADPH as an electron donor. Involved in endothelial generation of reactive oxygen species (ROS), proliferation and angiogenesis and contributes to endothelial response to thrombin. Regulates redox-dependent processes in lymphocytes and spermatozoa. Calcium-dependent NADPH oxidase that catalyzes the generation of superoxide from molecular oxygen utilizing NADPH as an electron donor. In terms of biological role, this isoform lacks calcium-binding domains and was showed to present a NADPH oxidase activity in a calcium-independent manner. May be involved in endothelial generation of reactive oxygen species (ROS), proliferation and angiogenesis and contribute to endothelial response to thrombin. However another study showed an absence of oxidase activity. Subject to rapid degradation. Functionally, lacks calcium-dependent NADPH oxidase activity. This chain is NADPH oxidase 5, found in Homo sapiens (Human).